A 333-amino-acid chain; its full sequence is Meiotic drive suppressor wtf9 (333 aa).

The interval 1 to 69 is disordered; it reads MKNNYTSLKS…ENHSSGTTDN (69 aa). The span at 19–30 shows a compositional bias: basic and acidic residues; it reads KTDHEIDLEKGP. A run of 4 helical transmembrane segments spans residues 73-95, 108-130, 174-191, and 204-226; these read LLIK…VCYL, VEWT…LTYF, WVVI…TLFL, and LICS…RLPF.

This sequence belongs to the WTF family. In terms of assembly, homomer. Interacts with other proteins that exhibit high sequence similarity.

The protein resides in the spore membrane. Its subcellular location is the vacuole membrane. Its function is as follows. Acts as a suppressor component of the dual wtf meiotic drive system, and can suppress but not confer meiotic drive by compatible poisons. Wtf meiotic drive systems promote unequal transmission of alleles from the parental zygote to progeny spores by encoding a poison and an antidote from the same locus; the poison is trans-acting and forms toxic aggregates in all spores within an ascus, wherease the antidote is spore-specific and targets aggregates for degradation by the vacuole. Meiotic drive by wtf systems therefore lead to poisoning of all progeny that do not inherit the dual poison/antidote allele, or express a compatible antidote. The polypeptide is Meiotic drive suppressor wtf9 (Schizosaccharomyces pombe (strain 972 / ATCC 24843) (Fission yeast)).